A 213-amino-acid chain; its full sequence is Ribosomal RNA small subunit methyltransferase G (213 aa).

S-adenosyl-L-methionine is bound by residues Gly-81, Leu-86, Val-132–Glu-133, and Arg-147.

The protein belongs to the methyltransferase superfamily. RNA methyltransferase RsmG family.

The protein localises to the cytoplasm. It carries out the reaction guanosine(527) in 16S rRNA + S-adenosyl-L-methionine = N(7)-methylguanosine(527) in 16S rRNA + S-adenosyl-L-homocysteine. In terms of biological role, specifically methylates the N7 position of guanine in position 527 of 16S rRNA. The polypeptide is Ribosomal RNA small subunit methyltransferase G (Mannheimia succiniciproducens (strain KCTC 0769BP / MBEL55E)).